The following is a 189-amino-acid chain: UPF0312 protein VPA0850 (189 aa).

The first 22 residues, 1–22, serve as a signal peptide directing secretion; that stretch reads MKKSLFATGLAIAMALPLGAQA.

This sequence belongs to the UPF0312 family. Type 1 subfamily.

It is found in the periplasm. The protein is UPF0312 protein VPA0850 of Vibrio parahaemolyticus serotype O3:K6 (strain RIMD 2210633).